The chain runs to 404 residues: Argininosuccinate synthase (404 aa).

Residues 10–18 and Ala-37 contribute to the ATP site; that span reads AFSGGLDTS. Residues Tyr-88 and Ser-93 each contribute to the L-citrulline site. Gly-118 is a binding site for ATP. L-aspartate-binding residues include Thr-120, Asn-124, and Asp-125. Position 124 (Asn-124) interacts with L-citrulline. L-citrulline is bound by residues Arg-128, Ser-179, Ser-188, Glu-264, and Tyr-276.

This sequence belongs to the argininosuccinate synthase family. Type 1 subfamily. Homotetramer.

The protein resides in the cytoplasm. It catalyses the reaction L-citrulline + L-aspartate + ATP = 2-(N(omega)-L-arginino)succinate + AMP + diphosphate + H(+). It functions in the pathway amino-acid biosynthesis; L-arginine biosynthesis; L-arginine from L-ornithine and carbamoyl phosphate: step 2/3. This chain is Argininosuccinate synthase, found in Nitrosomonas europaea (strain ATCC 19718 / CIP 103999 / KCTC 2705 / NBRC 14298).